The following is a 328-amino-acid chain: Tyrosine--tRNA ligase (328 aa).

Tyrosine 33 provides a ligand contact to L-tyrosine. Residues 38-46 (PSGVLHIGH) carry the 'HIGH' region motif. 4 residues coordinate L-tyrosine: tyrosine 154, glutamine 158, aspartate 161, and glutamine 176. A disordered region spans residues 193–227 (EPPTSLHTPLIADLGTGRGKMSSSEGVTISMEDSR). The short motif at 212–216 (KMSSS) is the 'KMSKS' region element. Serine 215 is an ATP binding site.

Belongs to the class-I aminoacyl-tRNA synthetase family. TyrS type 3 subfamily. In terms of assembly, homodimer.

Its subcellular location is the cytoplasm. It catalyses the reaction tRNA(Tyr) + L-tyrosine + ATP = L-tyrosyl-tRNA(Tyr) + AMP + diphosphate + H(+). In terms of biological role, catalyzes the attachment of tyrosine to tRNA(Tyr) in a two-step reaction: tyrosine is first activated by ATP to form Tyr-AMP and then transferred to the acceptor end of tRNA(Tyr). The polypeptide is Tyrosine--tRNA ligase (Halorubrum lacusprofundi (strain ATCC 49239 / DSM 5036 / JCM 8891 / ACAM 34)).